The sequence spans 215 residues: L-fuculose phosphate aldolase (215 aa).

Residues 28–29, 43–44, and 71–72 contribute to the substrate site; these read GN, TG, and SS. The active-site Proton donor/acceptor is Glu73. Zn(2+) contacts are provided by Glu73, His92, His94, and His155.

Belongs to the aldolase class II family. AraD/FucA subfamily. As to quaternary structure, homotetramer. It depends on Zn(2+) as a cofactor.

It carries out the reaction L-fuculose 1-phosphate = (S)-lactaldehyde + dihydroxyacetone phosphate. It functions in the pathway carbohydrate degradation; L-fucose degradation; L-lactaldehyde and glycerone phosphate from L-fucose: step 3/3. Its activity is regulated as follows. Inhibited by phosphoglycolohydroxamate (PGH). Involved in the degradation of L-fucose and D-arabinose. Catalyzes the reversible cleavage of L-fuculose 1-phosphate (Fuc1P) to yield dihydroxyacetone phosphate (DHAP) and L-lactaldehyde. Also able to catalyze the reversible cleavage of D-ribulose 1-phosphate, but FucA has a higher affinity for L-fuculose 1-phosphate and L-lactaldehyde than for D-ribulose 1-phosphate and glycolaldehyde, respectively. FucA possesses a high specificity for the dihydroxyacetone phosphate (DHAP), but accepts a great variety of different aldehydes and has a strong preference for L-configurated alpha-hydroxy aldehydes. FucA generates a vicinal diol unit having the absolute (3R,4R)-cis configuration (D-erythro). The protein is L-fuculose phosphate aldolase of Escherichia coli (strain K12).